A 180-amino-acid polypeptide reads, in one-letter code: Ribosome maturation factor RimM (180 aa).

In terms of domain architecture, PRC barrel spans 108–180 (PDEYYWVDLE…LIVVDWDPDF (73 aa)).

This sequence belongs to the RimM family. Binds ribosomal protein uS19.

Its subcellular location is the cytoplasm. Functionally, an accessory protein needed during the final step in the assembly of 30S ribosomal subunit, possibly for assembly of the head region. Essential for efficient processing of 16S rRNA. May be needed both before and after RbfA during the maturation of 16S rRNA. It has affinity for free ribosomal 30S subunits but not for 70S ribosomes. The chain is Ribosome maturation factor RimM from Xanthomonas euvesicatoria pv. vesicatoria (strain 85-10) (Xanthomonas campestris pv. vesicatoria).